The chain runs to 407 residues: MNFIITTRDFSNDDSVLRAAEMRDNVAGSISKAYKGTVRAEGKKKLLLKHLPVPPGGCSRRNSNLFVFCTERDYRKFHQGIAQLKRAPAELDPHEIQQVTASIRCRLQPSLREPPTPADELQTAVSRVCALFNQLVFTAQLRHYCEHQDKVVSYARDELTKRCGEKSALGVEVHQLVALLPHERHRELCHVLIGLLHQTPHMWARSIRLIGHLRHYLQNSFLHLLMNSGLDIAQVFDGCYHSEAYRMLFQIGHTDSVSAALELSHSAAAGPPEADENNDEGEEDDDELRHSDPAPLHESKKPRNARRPRTRVPPHEQKPEENEEEEEELFPSCKATAAFLRAEPSVSNDDGNGGERCDTLATALRHCADEEDGPLASQTAVRVAATPSPSVTPALTPVTSPITPLCI.

Disordered stretches follow at residues 268–330 (AAGP…EELF) and 388–407 (SPSV…PLCI). Residues 273-286 (EADENNDEGEEDDD) show a composition bias toward acidic residues. Residues 287–301 (ELRHSDPAPLHESKK) show a composition bias toward basic and acidic residues. Positions 302–312 (PRNARRPRTRV) are enriched in basic residues.

This sequence belongs to the HHV-5 UL34 protein family.

The protein localises to the host nucleus. In terms of biological role, acts as a transcriptional repressor of the US3 gene expression through a specific DNA sequence named the transcriptional repressive element (tre). This is Transcriptional regulator UL34 (UL34) from Human cytomegalovirus (strain Towne) (HHV-5).